Reading from the N-terminus, the 1065-residue chain is Pumilio domain-containing protein P35G2.14 (1065 aa).

Disordered stretches follow at residues 1–78 (MHQD…SLRS), 130–265 (ITSK…PWSP), and 422–573 (TTGF…NTNS). The span at 16 to 44 (RNTISKPSNNNPPLDMSSLNNDFGQQLDS) shows a compositional bias: polar residues. The span at 59–77 (NPSSNFNDSNRSNISSSLR) shows a compositional bias: low complexity. 2 stretches are compositionally biased toward polar residues: residues 134-151 (LQNN…RGRT) and 169-189 (SSVS…HFNP). Composition is skewed to low complexity over residues 190–224 (SSSS…SEII) and 236–246 (SASNAANSGSN). 2 stretches are compositionally biased toward polar residues: residues 247–262 (TIRA…NTLP) and 434–455 (GLNT…TFEV). Threonine 260 carries the post-translational modification Phosphothreonine. The span at 470–483 (PLGSLSSRPKPSSS) shows a compositional bias: low complexity. Polar residues-rich tracts occupy residues 495-522 (LKTS…SSSP) and 529-551 (IHNQ…NGLR). A phosphoserine mark is found at serine 506, serine 511, and serine 515. The residue at position 554 (threonine 554) is a Phosphothreonine. A compositionally biased stretch (low complexity) spans 559–573 (NISTRSSSESNNTNS). The RRM domain occupies 592–666 (HALWVGNLPS…DPVCISFAKV (75 aa)). Positions 712–1065 (DLSKIYQILN…ELKKLAEVCA (354 aa)) constitute a PUM-HD domain. 6 Pumilio repeats span residues 771 to 808 (AINW…MMLE), 809 to 844 (RIAP…RLIA), 846 to 884 (HLQP…AILN), 886 to 917 (FWVI…VLVA), 919 to 954 (AITV…ILLT), and 956 to 993 (RFVQ…LVVD).

Its subcellular location is the cytoplasm. In Schizosaccharomyces pombe (strain 972 / ATCC 24843) (Fission yeast), this protein is Pumilio domain-containing protein P35G2.14.